A 240-amino-acid chain; its full sequence is uncharacterized protein (240 aa).

A helical membrane pass occupies residues 73–93; that stretch reads LLGCLYFFIYFVAPTLGPVLF.

Belongs to the universal ribosomal protein uS3 family.

It is found in the mitochondrion membrane. This is an uncharacterized protein from Arabidopsis thaliana (Mouse-ear cress).